We begin with the raw amino-acid sequence, 912 residues long: Effector protein hopAE1 (912 aa).

The segment covering 1 to 13 (MMPSQITRSSHSS) has biased composition (polar residues). Residues 1–32 (MMPSQITRSSHSSLPEVAPASGDATGVSEQTP) are disordered.

The protein belongs to the HopW family.

The protein resides in the secreted. This chain is Effector protein hopAE1 (hopAE1), found in Pseudomonas savastanoi pv. phaseolicola (strain 1448A / Race 6) (Pseudomonas syringae pv. phaseolicola (strain 1448A / Race 6)).